The chain runs to 83 residues: Heterin-1 (83 aa).

Positions 1–22 (MNGKLLLVSLMVTMLVMQPAEA) are cleaved as a signal peptide. Positions 66-83 (VAGQIPFDEFMDILHYRP) are excised as a propeptide.

It belongs to the non-disulfide-bridged peptide (NDBP) superfamily. Long chain multifunctional peptide (group 2) family. Expressed by the venom gland.

It localises to the secreted. Its subcellular location is the target cell membrane. Its function is as follows. Amphipathic peptide with potent activities against both Gram-positive and Gram-negative bacteria. Is the most active against the two Gram-positive Bacillus megaterium and Micrococcus luteus (MIC=4.0 uM for both). It has relatively low hemolytic activity against human erythrocytes. This chain is Heterin-1, found in Heterometrus spinifer (Asia giant forest scorpion).